We begin with the raw amino-acid sequence, 246 residues long: Homeobox protein SIX6 (246 aa).

A DNA-binding region (homeobox) is located at residues 126-186 (WDGEQKTHCF…KNRRQRDRAA (61 aa)). The span at 195 to 204 (QVLAQGSGRS) shows a compositional bias: polar residues. Residues 195–246 (QVLAQGSGRSLQAEEESGGEAGGAASSPAVSLSSKAATSAISITSSDSECDI) are disordered. Residues 217–246 (GAASSPAVSLSSKAATSAISITSSDSECDI) show a composition bias toward low complexity.

It belongs to the SIX/Sine oculis homeobox family. In the developing embryo, expressed in the anterior head-fold, the anterior neural plate and optic vesicle. At later stages expression is maintained in the eye, while brain expression becomes limited. Not expressed in the lens placode.

It is found in the nucleus. Functionally, may be involved in eye development. The polypeptide is Homeobox protein SIX6 (SIX6) (Gallus gallus (Chicken)).